The chain runs to 397 residues: Tryptophan synthase beta chain (397 aa).

Position 91 is an N6-(pyridoxal phosphate)lysine (Lys91).

It belongs to the TrpB family. Tetramer of two alpha and two beta chains. The cofactor is pyridoxal 5'-phosphate.

It carries out the reaction (1S,2R)-1-C-(indol-3-yl)glycerol 3-phosphate + L-serine = D-glyceraldehyde 3-phosphate + L-tryptophan + H2O. It functions in the pathway amino-acid biosynthesis; L-tryptophan biosynthesis; L-tryptophan from chorismate: step 5/5. Its function is as follows. The beta subunit is responsible for the synthesis of L-tryptophan from indole and L-serine. This Bacillus cereus (strain ATCC 14579 / DSM 31 / CCUG 7414 / JCM 2152 / NBRC 15305 / NCIMB 9373 / NCTC 2599 / NRRL B-3711) protein is Tryptophan synthase beta chain.